The primary structure comprises 263 residues: tRNA dimethylallyltransferase (263 aa).

It belongs to the IPP transferase family. Monomer. The cofactor is Mg(2+).

It catalyses the reaction adenosine(37) in tRNA + dimethylallyl diphosphate = N(6)-dimethylallyladenosine(37) in tRNA + diphosphate. Functionally, catalyzes the transfer of a dimethylallyl group onto the adenine at position 37 in tRNAs that read codons beginning with uridine, leading to the formation of N6-(dimethylallyl)adenosine (i(6)A). This Leifsonia xyli subsp. xyli (strain CTCB07) protein is tRNA dimethylallyltransferase.